We begin with the raw amino-acid sequence, 151 residues long: Sec-independent protein translocase protein TatB (151 aa).

The chain crosses the membrane as a helical span at residues 1 to 21; the sequence is MFDIGFLELLICGVIALLVLG. Composition is skewed to basic and acidic residues over residues 87-99 and 122-132; these read KYEH…DQTR and EPPHEPVRDEA. A disordered region spans residues 87–151; that stretch reads KYEHMILPDD…SPTSPSDKYS (65 aa). Positions 134 to 151 are enriched in low complexity; that stretch reads ASDQPSDSSPTSPSDKYS.

Belongs to the TatB family. In terms of assembly, the Tat system comprises two distinct complexes: a TatABC complex, containing multiple copies of TatA, TatB and TatC subunits, and a separate TatA complex, containing only TatA subunits. Substrates initially bind to the TatABC complex, which probably triggers association of the separate TatA complex to form the active translocon.

The protein localises to the cell inner membrane. Its function is as follows. Part of the twin-arginine translocation (Tat) system that transports large folded proteins containing a characteristic twin-arginine motif in their signal peptide across membranes. Together with TatC, TatB is part of a receptor directly interacting with Tat signal peptides. TatB may form an oligomeric binding site that transiently accommodates folded Tat precursor proteins before their translocation. The polypeptide is Sec-independent protein translocase protein TatB (Marinobacter nauticus (strain ATCC 700491 / DSM 11845 / VT8) (Marinobacter aquaeolei)).